Reading from the N-terminus, the 176-residue chain is Inner membrane-spanning protein YciB (176 aa).

Transmembrane regions (helical) follow at residues 22–42, 50–70, 81–101, 121–141, and 149–169; these read IYYASGALIVASALVLVYTWL, VALITFVLVAIFGSLTLYYHN, IYSLFAAALLISQFVFGKPLI, IAWALFFLACGAANIYIAFWL, and FKVFGLTGLTLVFTLLSGIYI.

It belongs to the YciB family.

It localises to the cell inner membrane. Functionally, plays a role in cell envelope biogenesis, maintenance of cell envelope integrity and membrane homeostasis. This is Inner membrane-spanning protein YciB from Sodalis glossinidius (strain morsitans).